A 515-amino-acid chain; its full sequence is Hopanoid C-3 methylase (515 aa).

One can recognise a B12-binding domain in the interval 8–141; that stretch reads PSPLMYTKVF…ETLARRGNID (134 aa). One can recognise a Radical SAM core domain in the interval 181-395; sequence GTLDPCASIE…DIQHAVLPTR (215 aa). Residues Cys195, Cys199, and Cys202 each coordinate [4Fe-4S] cluster.

Belongs to the radical SAM superfamily. [4Fe-4S] cluster is required as a cofactor.

In terms of biological role, required for methylation of hopanoids at the C-3 position. This Methylococcus capsulatus (strain ATCC 33009 / NCIMB 11132 / Bath) protein is Hopanoid C-3 methylase.